Consider the following 276-residue polypeptide: Membrane protein insertase YidC 2 (276 aa).

Positions 1–22 (MGVKKKLKLTSLLGLSLLIMTA) are cleaved as a signal peptide. Cys23 is lipidated: N-palmitoyl cysteine. Cys23 is lipidated: S-diacylglycerol cysteine. The next 4 helical transmembrane spans lie at 58-78 (ISIG…LLPV), 130-150 (SDSL…FQAL), 169-189 (VDTT…STWL), and 207-227 (GIPV…ALYW).

The protein belongs to the OXA1/ALB3/YidC family. Type 2 subfamily. In terms of assembly, interacts with KhpB (also called EloR/Jag).

Its subcellular location is the cell membrane. In terms of biological role, required for the insertion and/or proper folding and/or complex formation of integral membrane proteins into the membrane. Involved in integration of membrane proteins that insert both dependently and independently of the Sec translocase complex, as well as at least some lipoproteins. The sequence is that of Membrane protein insertase YidC 2 from Streptococcus pneumoniae (strain ATCC BAA-255 / R6).